A 447-amino-acid chain; its full sequence is Tubulin beta chain (447 aa).

GTP contacts are provided by Q11, E69, S138, G142, T143, G144, N204, and N226. E69 is a binding site for Mg(2+). A disordered region spans residues 425–447 (YQDASISEGEEEYEEEVPIEGEE). The segment covering 432 to 447 (EGEEEYEEEVPIEGEE) has biased composition (acidic residues).

The protein belongs to the tubulin family. As to quaternary structure, dimer of alpha and beta chains. A typical microtubule is a hollow water-filled tube with an outer diameter of 25 nm and an inner diameter of 15 nM. Alpha-beta heterodimers associate head-to-tail to form protofilaments running lengthwise along the microtubule wall with the beta-tubulin subunit facing the microtubule plus end conferring a structural polarity. Microtubules usually have 13 protofilaments but different protofilament numbers can be found in some organisms and specialized cells. Requires Mg(2+) as cofactor.

It is found in the cytoplasm. The protein localises to the cytoskeleton. Tubulin is the major constituent of microtubules, a cylinder consisting of laterally associated linear protofilaments composed of alpha- and beta-tubulin heterodimers. Microtubules grow by the addition of GTP-tubulin dimers to the microtubule end, where a stabilizing cap forms. Below the cap, tubulin dimers are in GDP-bound state, owing to GTPase activity of alpha-tubulin. In Botryotinia fuckeliana (Noble rot fungus), this protein is Tubulin beta chain (tubA).